We begin with the raw amino-acid sequence, 367 residues long: Zinc transport system membrane protein TroD (367 aa).

9 helical membrane passes run Val-5–Leu-25, Ile-28–Phe-48, Phe-56–Leu-76, Ala-87–Ala-107, Ser-140–Lys-160, Val-170–Val-190, Val-201–Thr-221, Leu-224–Phe-244, and Gly-251–Phe-271.

Belongs to the ABC-3 integral membrane protein family.

The protein resides in the cell membrane. Part of an ATP-driven transport system TroABCD for zinc. The polypeptide is Zinc transport system membrane protein TroD (troD) (Treponema pallidum (strain Nichols)).